The following is a 90-amino-acid chain: Small ribosomal subunit protein bS20 (90 aa).

Over residues 1–10 (MANHKSTQKS) the composition is skewed to polar residues. The disordered stretch occupies residues 1–25 (MANHKSTQKSIRQDQKRNLINKSRK).

It belongs to the bacterial ribosomal protein bS20 family.

Functionally, binds directly to 16S ribosomal RNA. This chain is Small ribosomal subunit protein bS20, found in Orientia tsutsugamushi (strain Boryong) (Rickettsia tsutsugamushi).